The following is a 117-amino-acid chain: NADH-quinone oxidoreductase subunit A (117 aa).

Helical transmembrane passes span 4-24 (WIGV…GMLT), 64-84 (LMFV…VSFV), and 86-106 (LGLA…LGLW).

Belongs to the complex I subunit 3 family. As to quaternary structure, NDH-1 is composed of 14 different subunits. Subunits NuoA, H, J, K, L, M, N constitute the membrane sector of the complex.

The protein localises to the cell membrane. The enzyme catalyses a quinone + NADH + 5 H(+)(in) = a quinol + NAD(+) + 4 H(+)(out). Functionally, NDH-1 shuttles electrons from NADH, via FMN and iron-sulfur (Fe-S) centers, to quinones in the respiratory chain. The immediate electron acceptor for the enzyme in this species is believed to be a menaquinone. Couples the redox reaction to proton translocation (for every two electrons transferred, four hydrogen ions are translocated across the cytoplasmic membrane), and thus conserves the redox energy in a proton gradient. The protein is NADH-quinone oxidoreductase subunit A of Desulforamulus reducens (strain ATCC BAA-1160 / DSM 100696 / MI-1) (Desulfotomaculum reducens).